An 886-amino-acid chain; its full sequence is Alanine--tRNA ligase (886 aa).

Zn(2+) is bound by residues H564, H568, C676, and H680.

The protein belongs to the class-II aminoacyl-tRNA synthetase family. The cofactor is Zn(2+).

It is found in the cytoplasm. It carries out the reaction tRNA(Ala) + L-alanine + ATP = L-alanyl-tRNA(Ala) + AMP + diphosphate. In terms of biological role, catalyzes the attachment of alanine to tRNA(Ala) in a two-step reaction: alanine is first activated by ATP to form Ala-AMP and then transferred to the acceptor end of tRNA(Ala). Also edits incorrectly charged Ser-tRNA(Ala) and Gly-tRNA(Ala) via its editing domain. This chain is Alanine--tRNA ligase, found in Bartonella bacilliformis.